The chain runs to 372 residues: Lysophosphatidic acid receptor 5 (372 aa).

Topologically, residues 1–30 (MFANSSANTTSTNSSVLQCPDYRDTHRLHM) are extracellular. Asparagine 4, asparagine 8, and asparagine 13 each carry an N-linked (GlcNAc...) asparagine glycan. Residues 31 to 51 (VVYSLVLATGLPLNALALWVF) traverse the membrane as a helical segment. Over 52-59 (LRVLRVHS) the chain is Cytoplasmic. Residues 60 to 80 (VVSVYMCNLAASDLLFTLSLP) traverse the membrane as a helical segment. Residues 81–100 (LRLSYYAQHHWPFPGFLCQT) lie on the Extracellular side of the membrane. The cysteines at positions 98 and 179 are disulfide-linked. Residues 101–121 (SGAIFQMNMYGSCLFLMLINV) form a helical membrane-spanning segment. Topologically, residues 122–140 (DRYAAIVHPLRLRHLRRPR) are cytoplasmic. Residues 141–161 (VARRLCLGVWALILLFAVPAA) traverse the membrane as a helical segment. The Extracellular segment spans residues 162 to 191 (RVHSPSHCTYKNITVRLCFESFSDELWKGR). A glycan (N-linked (GlcNAc...) asparagine) is linked at asparagine 173. A helical transmembrane segment spans residues 192 to 212 (LLPLLLLAEILGFLLPLAAVV). The Cytoplasmic segment spans residues 213–243 (YSSGRVFWTLARPDATQSQRRRKTVRLLLAN). The helical transmembrane segment at 244-264 (LIIFLLCFVPYNSTLAVYGLL) threads the bilayer. Residues 265 to 280 (RANLVKNSIQDRDQVR) are Extracellular-facing. Residues 281–301 (GVLMIMVLLAGANCVLDPLVY) traverse the membrane as a helical segment. Over 302 to 372 (YFSAEGFRNT…PDNCSQDSAL (71 aa)) the chain is Cytoplasmic.

It belongs to the G-protein coupled receptor 1 family.

It is found in the cell membrane. In terms of biological role, receptor for lysophosphatidic acid (LPA), a mediator of diverse cellular activities. In Mus musculus (Mouse), this protein is Lysophosphatidic acid receptor 5 (Lpar5).